The following is a 443-amino-acid chain: Exodeoxyribonuclease 7 large subunit (443 aa).

It belongs to the XseA family. In terms of assembly, heterooligomer composed of large and small subunits.

The protein localises to the cytoplasm. It catalyses the reaction Exonucleolytic cleavage in either 5'- to 3'- or 3'- to 5'-direction to yield nucleoside 5'-phosphates.. Functionally, bidirectionally degrades single-stranded DNA into large acid-insoluble oligonucleotides, which are then degraded further into small acid-soluble oligonucleotides. The chain is Exodeoxyribonuclease 7 large subunit from Legionella pneumophila (strain Corby).